A 159-amino-acid chain; its full sequence is SsrA-binding protein (159 aa).

The protein belongs to the SmpB family.

It localises to the cytoplasm. Functionally, required for rescue of stalled ribosomes mediated by trans-translation. Binds to transfer-messenger RNA (tmRNA), required for stable association of tmRNA with ribosomes. tmRNA and SmpB together mimic tRNA shape, replacing the anticodon stem-loop with SmpB. tmRNA is encoded by the ssrA gene; the 2 termini fold to resemble tRNA(Ala) and it encodes a 'tag peptide', a short internal open reading frame. During trans-translation Ala-aminoacylated tmRNA acts like a tRNA, entering the A-site of stalled ribosomes, displacing the stalled mRNA. The ribosome then switches to translate the ORF on the tmRNA; the nascent peptide is terminated with the 'tag peptide' encoded by the tmRNA and targeted for degradation. The ribosome is freed to recommence translation, which seems to be the essential function of trans-translation. This chain is SsrA-binding protein, found in Bifidobacterium adolescentis (strain ATCC 15703 / DSM 20083 / NCTC 11814 / E194a).